A 534-amino-acid polypeptide reads, in one-letter code: CTP synthase (534 aa).

The interval 1–266 (MKTKFLFITG…DERIIDYLNI (266 aa)) is amidoligase domain. S14 is a binding site for CTP. Residue S14 participates in UTP binding. ATP-binding positions include 15–20 (SLGKGL) and D72. Residues D72 and E140 each contribute to the Mg(2+) site. Residues 147–149 (DIE), 187–192 (KTKPTQ), and K223 each bind CTP. UTP is bound by residues 187-192 (KTKPTQ) and K223. Residue 239-241 (RDV) coordinates ATP. Positions 291-533 (TIAIVGKYVE…VGASLKHHGE (243 aa)) constitute a Glutamine amidotransferase type-1 domain. G353 lines the L-glutamine pocket. C380 (nucleophile; for glutamine hydrolysis) is an active-site residue. L-glutamine-binding positions include 381–384 (LGMQ), E404, and R461. Active-site residues include H506 and E508.

This sequence belongs to the CTP synthase family. Homotetramer.

It catalyses the reaction UTP + L-glutamine + ATP + H2O = CTP + L-glutamate + ADP + phosphate + 2 H(+). The enzyme catalyses L-glutamine + H2O = L-glutamate + NH4(+). It carries out the reaction UTP + NH4(+) + ATP = CTP + ADP + phosphate + 2 H(+). It functions in the pathway pyrimidine metabolism; CTP biosynthesis via de novo pathway; CTP from UDP: step 2/2. With respect to regulation, allosterically activated by GTP, when glutamine is the substrate; GTP has no effect on the reaction when ammonia is the substrate. The allosteric effector GTP functions by stabilizing the protein conformation that binds the tetrahedral intermediate(s) formed during glutamine hydrolysis. Inhibited by the product CTP, via allosteric rather than competitive inhibition. Its function is as follows. Catalyzes the ATP-dependent amination of UTP to CTP with either L-glutamine or ammonia as the source of nitrogen. Regulates intracellular CTP levels through interactions with the four ribonucleotide triphosphates. This is CTP synthase from Syntrophotalea carbinolica (strain DSM 2380 / NBRC 103641 / GraBd1) (Pelobacter carbinolicus).